The chain runs to 479 residues: Aspartyl/glutamyl-tRNA(Asn/Gln) amidotransferase subunit B (479 aa).

It belongs to the GatB/GatE family. GatB subfamily. In terms of assembly, heterotrimer of A, B and C subunits.

It carries out the reaction L-glutamyl-tRNA(Gln) + L-glutamine + ATP + H2O = L-glutaminyl-tRNA(Gln) + L-glutamate + ADP + phosphate + H(+). The enzyme catalyses L-aspartyl-tRNA(Asn) + L-glutamine + ATP + H2O = L-asparaginyl-tRNA(Asn) + L-glutamate + ADP + phosphate + 2 H(+). Its function is as follows. Allows the formation of correctly charged Asn-tRNA(Asn) or Gln-tRNA(Gln) through the transamidation of misacylated Asp-tRNA(Asn) or Glu-tRNA(Gln) in organisms which lack either or both of asparaginyl-tRNA or glutaminyl-tRNA synthetases. The reaction takes place in the presence of glutamine and ATP through an activated phospho-Asp-tRNA(Asn) or phospho-Glu-tRNA(Gln). The sequence is that of Aspartyl/glutamyl-tRNA(Asn/Gln) amidotransferase subunit B from Streptococcus uberis (strain ATCC BAA-854 / 0140J).